The sequence spans 473 residues: Nitrogenase vanadium-iron protein alpha chain (473 aa).

3 residues coordinate [8Fe-7S] cluster: Cys49, Cys74, and Cys137. [7Fe-V-9S-C-homocitryl] cluster is bound by residues Cys256 and His422.

Belongs to the NifD/NifK/NifE/NifN family. In terms of assembly, hexamer of two alpha, two beta, and two delta chains. The cofactor is [8Fe-7S] cluster. [7Fe-V-9S-C-homocitryl] cluster is required as a cofactor.

It carries out the reaction N2 + 8 reduced [2Fe-2S]-[ferredoxin] + 16 ATP + 16 H2O = H2 + 8 oxidized [2Fe-2S]-[ferredoxin] + 2 NH4(+) + 16 ADP + 16 phosphate + 6 H(+). Functionally, this vanadium-iron protein is part of the nitrogenase complex that catalyzes the key enzymatic reactions in nitrogen fixation. The polypeptide is Nitrogenase vanadium-iron protein alpha chain (vnfD) (Azotobacter chroococcum mcd 1).